Reading from the N-terminus, the 1331-residue chain is MVEVSEKPNTQDDGVSKQENRNPASSSSSTSDKEKVAKKGNSDATKSSTPEDLDAQLAHLPEHEREILKQQLFIPDVKATYGTLFRYATRNDMIFLAIVSLASIAAGAALPLFTVLFGSLAGTFRDIALHRITYDEFNSILTRNSLYFVYLGIAQFILLYVSTVGFIYVGEHITQKIRAKYLHAILRQNIGFFDKLGAGEVTTRITADTNLIQDGISEKVGLTLTALSTFFSAFIIGYVRYWKLALICSSTIVAMILVMGGISRFVVKSGRMTLVSYGEGGTVAEEVISSIRNATAFGTQEKLARQYEVHLKEARKWGRRLQMMLGIMFGSMMAIMYSNYGLGFWMGSRFLVGGETDLSAIVNILLAIVIGSFSIGNVAPNTQAFASAISAGAKIFSTIDRVSAIDPGSDEGDTIENVEGTIEFRGIKHIYPSRPEVVVMEDINLVVPKGKTTALVGPSGSGKSTVVGLLERFYNPVSGSVLLDGRDIKTLNLRWLRQQISLVSQEPTLFGTTIFENIRLGLIGSPMENESEEQIKERIVSAAKEANAHDFIMGLPDGYATDVGQRGFLLSGGQKQRIAIARAIVSDPKILLLDEATSALDTKSEGVVQAALDAASRGRTTIVIAHRLSTIKSADNIVVIVGGRIAEQGTHDELVDKKGTYLQLVEAQKINEERGEESEDEAVLEKEKEISRQISVPAKSVNSGKYPDEDVEANLGRIDTKKSLSSVILSQKRSQENETEYSLGTLIRFIAGFNKPERLIMLCGFFFAVLSGAGQPVQSVFFAKGITTLSLPPSLYGKLREDANFWSLMFLMLGLVQLVTQSAQGVIFAICSESLIYRARSKSFRAMLRQDIAFFDLPENSTGALTSFLSTETKHLSGVSGATLGTILMVSTTLIVALTVALAFGWKLALVCISTVPVLLLCGFYRFWILAQFQTRAKKAYESSASYACEATSSIRTVASLTREQGVMEIYEGQLNDQAKKSLRSVAKSSLLYAASQSFSFFCLALGFWYGGGLLGKGEYNAFQFFLCISCVIFGSQSAGIVFSFSPDMGKAKSAAADFKRLFDRVPTIDIESPDGEKLETVEGTIEFRDVHFRYPTRPEQPVLRGLNLTVKPGQYIALVGPSGCGKSTTIALVERFYDTLSGGVYIDGKDISRLNVNSYRSHLALVSQEPTLYQGTIRDNVLLGVDRDELPDEQVFAACKAANIYDFIMSLPDGFGTVVGSKGSMLSGGQKQRIAIARALIRDPKVLLLDEATSALDSESEKVVQAALDAAAKGRTTIAVAHRLSTIQKADIIYVFDQGRIVESGTHHELLQNKGRYYELVHMQSLEKTQ.

2 stretches are compositionally biased toward basic and acidic residues: residues 1-20 (MVEV…KQEN) and 31-41 (SDKEKVAKKGN). Positions 1-51 (MVEVSEKPNTQDDGVSKQENRNPASSSSSTSDKEKVAKKGNSDATKSSTPE) are disordered. Transmembrane regions (helical) follow at residues 93–113 (MIFL…LPLF), 147–167 (YFVY…VGFI), 219–239 (KVGL…IGYV), and 242–262 (WKLA…MGGI). Positions 97–387 (AIVSLASIAA…VAPNTQAFAS (291 aa)) constitute an ABC transmembrane type-1 1 domain. Residue Asn293 is glycosylated (N-linked (GlcNAc...) asparagine). A run of 2 helical transmembrane segments spans residues 325-345 (LGIM…LGFW) and 358-378 (LSAI…IGNV). The ABC transporter 1 domain maps to 422–667 (IEFRGIKHIY…KGTYLQLVEA (246 aa)). 457 to 464 (GPSGSGKS) contributes to the ATP binding site. N-linked (GlcNAc...) asparagine glycosylation is found at Asn529 and Asn737. The next 2 membrane-spanning stretches (helical) occupy residues 762–782 (LCGF…SVFF) and 810–830 (FLML…IFAI). In terms of domain architecture, ABC transmembrane type-1 2 spans 764–1051 (GFFFAVLSGA…VFSFSPDMGK (288 aa)). A glycan (N-linked (GlcNAc...) asparagine) is linked at Asn860. Transmembrane regions (helical) follow at residues 884-904 (LGTI…ALAF), 910-930 (LVCI…FWIL), 995-1015 (ASQS…GGLL), and 1025-1045 (FFLC…VFSF). One can recognise an ABC transporter 2 domain in the interval 1086–1324 (IEFRDVHFRY…KGRYYELVHM (239 aa)). N-linked (GlcNAc...) asparagine glycosylation is present at Asn1108. 1121 to 1128 (GPSGCGKS) serves as a coordination point for ATP.

Belongs to the ABC transporter superfamily. ABCB family. Multidrug resistance exporter (TC 3.A.1.201) subfamily.

Its subcellular location is the cell membrane. The enzyme catalyses itraconazole(in) + ATP + H2O = itraconazole(out) + ADP + phosphate + H(+). In terms of biological role, pleiotropic ABC efflux transporter that may be involved in the modulation susceptibility to a wide range of unrelated cytotoxic compounds. The chain is ABC multidrug transporter MDR2 from Trichophyton equinum (strain ATCC MYA-4606 / CBS 127.97) (Horse ringworm fungus).